The sequence spans 171 residues: UPF0398 protein spyM18_1659 (171 aa).

Belongs to the UPF0398 family.

This Streptococcus pyogenes serotype M18 (strain MGAS8232) protein is UPF0398 protein spyM18_1659.